The sequence spans 190 residues: Probable GTP-binding protein EngB (190 aa).

The EngB-type G domain occupies 22–190 (VKREVAFAGR…LNELLKILIP (169 aa)). GTP-binding positions include 30–37 (GRSNVGKS), 56–60 (GKTRS), 74–77 (DLPG), 141–144 (TKTD), and 173–175 (FSA). Mg(2+) contacts are provided by Ser-37 and Thr-58.

This sequence belongs to the TRAFAC class TrmE-Era-EngA-EngB-Septin-like GTPase superfamily. EngB GTPase family. It depends on Mg(2+) as a cofactor.

In terms of biological role, necessary for normal cell division and for the maintenance of normal septation. The protein is Probable GTP-binding protein EngB of Kosmotoga olearia (strain ATCC BAA-1733 / DSM 21960 / TBF 19.5.1).